Reading from the N-terminus, the 284-residue chain is Orotidine 5'-phosphate decarboxylase (284 aa).

Substrate contacts are provided by residues D42, 64–66 (KTH), 96–105 (DRKFADIGNT), Y237, and R255. K98 serves as the catalytic Proton donor.

The protein belongs to the OMP decarboxylase family.

It carries out the reaction orotidine 5'-phosphate + H(+) = UMP + CO2. The protein operates within pyrimidine metabolism; UMP biosynthesis via de novo pathway; UMP from orotate: step 2/2. This is Orotidine 5'-phosphate decarboxylase (URA3) from Magnusiomyces magnusii (Yeast).